A 231-amino-acid chain; its full sequence is 26S proteasome non-ATPase regulatory subunit 10 (231 aa).

ANK repeat units lie at residues 3 to 36 (GCVS…ATRT), 37 to 69 (DQDS…VNEK), 70 to 102 (DDAG…VNAV), 103 to 135 (NQNG…PDAK), 136 to 168 (NHYD…TNIQ), 169 to 201 (DTEG…IYIE), and 202 to 226 (NKEE…IAES).

As to quaternary structure, part of transient complex containing PSMD10, PSMC4, PSMC5 and PAAF1 formed during the assembly of the 26S proteasome. Stays associated throughout the assembly of the PA700/19S RC and is released upon association with the 20S core. Interacts with PSMC4. Interacts with RB1. Interacts with CDK4. Interacts with MDM2. Interacts with RELA. Associates with a CDK4:CCND2 serine/threonine kinase complex. Interacts with ARHGDIA and increases the interaction between ARHGDIA and RHOA, hence promotes ARHGDIA inactivation of RHOA and ROCK.

It localises to the cytoplasm. It is found in the nucleus. In terms of biological role, acts as a chaperone during the assembly of the 26S proteasome, specifically of the PA700/19S regulatory complex (RC). In the initial step of the base subcomplex assembly is part of an intermediate PSMD10:PSMC4:PSMC5:PAAF1 module which probably assembles with a PSMD5:PSMC2:PSMC1:PSMD2 module. Independently of the proteasome, regulates EGF-induced AKT activation through inhibition of the RHOA/ROCK/PTEN pathway, leading to prolonged AKT activation. Plays an important role in RAS-induced tumorigenesis. Acts as an oncoprotein by being involved in negative regulation of tumor suppressors RB1 and p53/TP53. Overexpression is leading to phosphorylation of RB1 and proteasomal degradation of RB1. Regulates CDK4-mediated phosphorylation of RB1 by competing with CDKN2A for binding with CDK4. Facilitates binding of MDM2 to p53/TP53 and the mono- and polyubiquitination of p53/TP53 by MDM2 suggesting a function in targeting the TP53:MDM2 complex to the 26S proteasome. Involved in p53-independent apoptosis. Involved in regulation of NF-kappa-B by retaining it in the cytoplasm. Binds to the NF-kappa-B component RELA and accelerates its XPO1/CRM1-mediated nuclear export. The sequence is that of 26S proteasome non-ATPase regulatory subunit 10 (Psmd10) from Rattus norvegicus (Rat).